Here is an 81-residue protein sequence, read N- to C-terminus: Defensin-like protein 311 (81 aa).

Residues 1 to 24 (MEKISAFFVILFLVSSCLVTMSVG) form the signal peptide. Disulfide bonds link C27/C50, C33/C57, and C41/C59.

It belongs to the DEFL family.

The protein resides in the secreted. The chain is Defensin-like protein 311 from Arabidopsis thaliana (Mouse-ear cress).